A 531-amino-acid polypeptide reads, in one-letter code: UPF0159 protein CPn_0746/CP_1126/CPj0746/CpB0774 (531 aa).

ThyX domains are found at residues 38 to 274 (KGAL…AEPH) and 309 to 511 (PSVQ…FKFV).

This sequence belongs to the UPF0159 family.

This Chlamydia pneumoniae (Chlamydophila pneumoniae) protein is UPF0159 protein CPn_0746/CP_1126/CPj0746/CpB0774.